Reading from the N-terminus, the 87-residue chain is U14-lycotoxin-Ls1b (87 aa).

The N-terminal stretch at Met-1 to Ser-20 is a signal peptide. The region spanning Glu-21 to Ser-66 is the WAP domain. 5 disulfide bridges follow: Cys-24/Cys-54, Cys-32/Cys-58, Cys-41/Cys-53, Cys-42/Cys-80, and Cys-47/Cys-62.

This sequence belongs to the venom protein 11 family. 01 (wap-1) subfamily. Contains 5 disulfide bonds. In terms of tissue distribution, expressed by the venom gland.

It is found in the secreted. In terms of biological role, has antibacterial activity. This Lycosa singoriensis (Wolf spider) protein is U14-lycotoxin-Ls1b.